A 529-amino-acid polypeptide reads, in one-letter code: Tyrosinase (529 aa).

Positions 1 to 18 are cleaved as a signal peptide; sequence MLLAALCCLLWSFRTSAG. Residues 19–472 lie on the Lumenal side of the membrane; sequence HFPRACASSK…IKPFLEQASR (454 aa). 3 N-linked (GlcNAc...) asparagine glycosylation sites follow: asparagine 86, asparagine 111, and asparagine 161. Positions 180, 202, and 211 each coordinate Cu cation. Residues asparagine 230 and asparagine 336 are each glycosylated (N-linked (GlcNAc...) asparagine). Histidine 362 and histidine 366 together coordinate Cu cation. Residue asparagine 370 is glycosylated (N-linked (GlcNAc...) asparagine). Histidine 389 serves as a coordination point for Cu cation. A helical membrane pass occupies residues 473–495; the sequence is IWPWLIGAAVVGSVLTAVLGRLT. Residues 496-529 lie on the Cytoplasmic side of the membrane; it reads SLLCRRKRKQLREERQPLLMEKEDYHSLLYQTHV.

It belongs to the tyrosinase family. Forms an OPN3-dependent complex with DCT in response to blue light in melanocytes. Cu(2+) serves as cofactor. Glycosylated.

It is found in the melanosome membrane. Its subcellular location is the melanosome. The enzyme catalyses 2 L-dopa + O2 = 2 L-dopaquinone + 2 H2O. The catalysed reaction is L-tyrosine + O2 = L-dopaquinone + H2O. It carries out the reaction 2 5,6-dihydroxyindole-2-carboxylate + O2 = 2 indole-5,6-quinone-2-carboxylate + 2 H2O. Its function is as follows. This is a copper-containing oxidase that functions in the formation of pigments such as melanins and other polyphenolic compounds. Catalyzes the initial and rate limiting step in the cascade of reactions leading to melanin production from tyrosine. In addition to hydroxylating tyrosine to DOPA (3,4-dihydroxyphenylalanine), also catalyzes the oxidation of DOPA to DOPA-quinone, and possibly the oxidation of DHI (5,6-dihydroxyindole) to indole-5,6 quinone. The sequence is that of Tyrosinase (TYR) from Felis catus (Cat).